Here is a 460-residue protein sequence, read N- to C-terminus: Ribosomal protein uS12 methylthiotransferase RimO (460 aa).

Positions 16–130 (NKIHFISLGC…ILSAIESKES (115 aa)) constitute an MTTase N-terminal domain. [4Fe-4S] cluster contacts are provided by cysteine 25, cysteine 61, cysteine 93, cysteine 164, cysteine 168, and cysteine 171. The region spanning 150–382 (STPKHYAYLK…SQTQKKNVEK (233 aa)) is the Radical SAM core domain. The 71-residue stretch at 385-455 (KQFVGKIVEA…GYDLVGRVVN (71 aa)) folds into the TRAM domain.

It belongs to the methylthiotransferase family. RimO subfamily. It depends on [4Fe-4S] cluster as a cofactor.

It localises to the cytoplasm. The enzyme catalyses L-aspartate(89)-[ribosomal protein uS12]-hydrogen + (sulfur carrier)-SH + AH2 + 2 S-adenosyl-L-methionine = 3-methylsulfanyl-L-aspartate(89)-[ribosomal protein uS12]-hydrogen + (sulfur carrier)-H + 5'-deoxyadenosine + L-methionine + A + S-adenosyl-L-homocysteine + 2 H(+). Functionally, catalyzes the methylthiolation of an aspartic acid residue of ribosomal protein uS12. The protein is Ribosomal protein uS12 methylthiotransferase RimO of Chlamydia abortus (strain DSM 27085 / S26/3) (Chlamydophila abortus).